Consider the following 421-residue polypeptide: MLKEEDKIFINLYGQQSYDLKSSKKRGDWYNTKALLDKGRDFIIDEVKKSGLRGRGGAGFSTGMKWSFMPKNSEKPCYLVVNADESEPGTCKDRDILRFEPHKLIEGCLIASFAIGANNCYIYIRGEFYNEASNMQRALDEAYTEGLIGKNACGSGFDCNIYLHRGAGAYICGEETALLESLEGKKGMPRLKPPFPAGFGLYGCPTTINNVESIAVVPTILRRGASWFAAIGKPNNTGTKIFCISGHVNKPCNIEEAMGIPLKELIEKYAGGVRGGWDNLKAIIPGGASVPLLPKSLCEVEMDFDSLRTVGSGLGTGGIIVMDRSTDIIYAIARLSKFYMHESCGQCTPCREGTGWMWRVMMRLVNGNAKKTEIETLLNVTKEIEGHTICALGDAAAWPIQGLIRHFRDEIEERIKNFGIA.

Position 54-63 (54-63 (GRGGAGFSTG)) interacts with NAD(+). 166-213 (GAGAYICGEETALLESLEGKKGMPRLKPPFPAGFGLYGCPTTINNVES) serves as a coordination point for FMN. Residues cysteine 344, cysteine 347, cysteine 350, and cysteine 390 each coordinate [4Fe-4S] cluster.

It belongs to the complex I 51 kDa subunit family. Requires FMN as cofactor. [4Fe-4S] cluster serves as cofactor.

It catalyses the reaction a quinone + NADH + 5 H(+)(in) = a quinol + NAD(+) + 4 H(+)(out). Its function is as follows. NDH-1 shuttles electrons from NADH, via FMN and iron-sulfur (Fe-S) centers, to quinones in the respiratory chain. Couples the redox reaction to proton translocation (for every two electrons transferred, four hydrogen ions are translocated across the cytoplasmic membrane), and thus conserves the redox energy in a proton gradient. This Rickettsia typhi (strain ATCC VR-144 / Wilmington) protein is NADH-quinone oxidoreductase subunit F (nuoF).